A 293-amino-acid polypeptide reads, in one-letter code: Acetyl-coenzyme A carboxylase carboxyl transferase subunit beta (293 aa).

Positions 29 to 293 (LWSKCPECGQ…GCKPMELTSA (265 aa)) constitute a CoA carboxyltransferase N-terminal domain. Zn(2+) is bound by residues Cys-33, Cys-36, Cys-52, and Cys-55. The C4-type zinc finger occupies 33–55 (CPECGQVVYLKDLKLNASVCANC).

It belongs to the AccD/PCCB family. As to quaternary structure, acetyl-CoA carboxylase is a heterohexamer composed of biotin carboxyl carrier protein (AccB), biotin carboxylase (AccC) and two subunits each of ACCase subunit alpha (AccA) and ACCase subunit beta (AccD). The cofactor is Zn(2+).

The protein resides in the cytoplasm. The catalysed reaction is N(6)-carboxybiotinyl-L-lysyl-[protein] + acetyl-CoA = N(6)-biotinyl-L-lysyl-[protein] + malonyl-CoA. The protein operates within lipid metabolism; malonyl-CoA biosynthesis; malonyl-CoA from acetyl-CoA: step 1/1. Its function is as follows. Component of the acetyl coenzyme A carboxylase (ACC) complex. Biotin carboxylase (BC) catalyzes the carboxylation of biotin on its carrier protein (BCCP) and then the CO(2) group is transferred by the transcarboxylase to acetyl-CoA to form malonyl-CoA. This is Acetyl-coenzyme A carboxylase carboxyl transferase subunit beta from Synechococcus sp. (strain CC9605).